Here is a 162-residue protein sequence, read N- to C-terminus: MNVPFRVGQGYDVHALVAGRPLIIGGVTIPHTHGLQGHSDADVLLHAVTDALLGAAGLGDIGRHFPDTDPAYRGADSRVLLRDAVAKVRAAGWAPVNIDATVHAQAPKIGPHAGAMVANIAADAGIDSASVNIKAKTNEGLGYLGRKEGIAATVVALLARAS.

The a divalent metal cation site is built by D12 and H14. 4-CDP-2-C-methyl-D-erythritol 2-phosphate is bound by residues 12–14 (DVH) and 38–39 (HS). H46 provides a ligand contact to a divalent metal cation. 4-CDP-2-C-methyl-D-erythritol 2-phosphate is bound by residues 60 to 62 (DIG), 65 to 69 (FPDTD), and R146.

Belongs to the IspF family. As to quaternary structure, homotrimer. A divalent metal cation is required as a cofactor.

It carries out the reaction 4-CDP-2-C-methyl-D-erythritol 2-phosphate = 2-C-methyl-D-erythritol 2,4-cyclic diphosphate + CMP. Its pathway is isoprenoid biosynthesis; isopentenyl diphosphate biosynthesis via DXP pathway; isopentenyl diphosphate from 1-deoxy-D-xylulose 5-phosphate: step 4/6. Functionally, involved in the biosynthesis of isopentenyl diphosphate (IPP) and dimethylallyl diphosphate (DMAPP), two major building blocks of isoprenoid compounds. Catalyzes the conversion of 4-diphosphocytidyl-2-C-methyl-D-erythritol 2-phosphate (CDP-ME2P) to 2-C-methyl-D-erythritol 2,4-cyclodiphosphate (ME-CPP) with a corresponding release of cytidine 5-monophosphate (CMP). This chain is 2-C-methyl-D-erythritol 2,4-cyclodiphosphate synthase, found in Bordetella petrii (strain ATCC BAA-461 / DSM 12804 / CCUG 43448).